The sequence spans 286 residues: Light-independent protochlorophyllide reductase iron-sulfur ATP-binding protein (286 aa).

Residues 10–15 (GIGKST) and Lys-39 each bind ATP. A Mg(2+)-binding site is contributed by Ser-14. Cys-95 and Cys-129 together coordinate [4Fe-4S] cluster. 180-181 (NR) contributes to the ATP binding site.

This sequence belongs to the NifH/BchL/ChlL family. Homodimer. Protochlorophyllide reductase is composed of three subunits; ChlL, ChlN and ChlB. [4Fe-4S] cluster is required as a cofactor.

It catalyses the reaction chlorophyllide a + oxidized 2[4Fe-4S]-[ferredoxin] + 2 ADP + 2 phosphate = protochlorophyllide a + reduced 2[4Fe-4S]-[ferredoxin] + 2 ATP + 2 H2O. It functions in the pathway porphyrin-containing compound metabolism; chlorophyll biosynthesis (light-independent). Its function is as follows. Component of the dark-operative protochlorophyllide reductase (DPOR) that uses Mg-ATP and reduced ferredoxin to reduce ring D of protochlorophyllide (Pchlide) to form chlorophyllide a (Chlide). This reaction is light-independent. The L component serves as a unique electron donor to the NB-component of the complex, and binds Mg-ATP. This chain is Light-independent protochlorophyllide reductase iron-sulfur ATP-binding protein, found in Leptolyngbya boryana (Plectonema boryanum).